A 343-amino-acid chain; its full sequence is Ribosomal RNA small subunit methyltransferase C (343 aa).

Belongs to the methyltransferase superfamily. RsmC family. Monomer.

The protein resides in the cytoplasm. It carries out the reaction guanosine(1207) in 16S rRNA + S-adenosyl-L-methionine = N(2)-methylguanosine(1207) in 16S rRNA + S-adenosyl-L-homocysteine + H(+). Specifically methylates the guanine in position 1207 of 16S rRNA in the 30S particle. The chain is Ribosomal RNA small subunit methyltransferase C from Escherichia coli O6:H1 (strain CFT073 / ATCC 700928 / UPEC).